Reading from the N-terminus, the 482-residue chain is MASEQPEAGSLADRITKPEEPAPAEAPEQTEDIPQTDGAAAQQGGSDLHEPDYTVEVKLSDLQADPNNPLFSVKNFEDLGLDPRILQGLSAMNFRKPSKIQERALPLLLGNPAKNLVGQSQSGTGKTAAFVLNILSRLDLSSEQLQKTPQALILAPTRELARQIVGVIQVMGQFLDGLVIGTAVPADTGARPAKMECSVVVGTPGTVMDMIKRRIMIANKLRVLVLDEADNMLDQQGLGDQCIRVKALLPRDIQVVLFSATFPAHVHEYASKFAPQANEITLQHEELTVEGIKQLYLDCSNDEDKYQTLVNLYGLLTVGSSIIFVKTRASAQEIEKRMVAEGHTVASLTGGIEGSQRDAVIDQFRAGHAKVLITTNVLARGIDVSTVSMVINYDIPEIHQPGARQRQADFQTYLHRIGRTGRFGRVGVSISFVSNREEWEMLNQIQRYFNTNIQRIDTKDWDEVEEIIKKTIKSSRAQLGFR.

The tract at residues 1–49 (MASEQPEAGSLADRITKPEEPAPAEAPEQTEDIPQTDGAAAQQGGSDLH) is disordered. Positions 74–102 (KNFEDLGLDPRILQGLSAMNFRKPSKIQE) match the Q motif motif. In terms of domain architecture, Helicase ATP-binding spans 107–280 (LLLGNPAKNL…SKFAPQANEI (174 aa)). 120–127 (SQSGTGKT) is an ATP binding site. The DEAD box signature appears at 227–230 (DEAD). The region spanning 291–464 (GIKQLYLDCS…RIDTKDWDEV (174 aa)) is the Helicase C-terminal domain.

Belongs to the DEAD box helicase family. DDX19/DBP5 subfamily. As to quaternary structure, associates with the nuclear pore complex.

It is found in the cytoplasm. Its subcellular location is the nucleus. The protein localises to the nuclear pore complex. It localises to the nucleus membrane. It catalyses the reaction ATP + H2O = ADP + phosphate + H(+). In terms of biological role, ATP-dependent RNA helicase associated with the nuclear pore complex and essential for mRNA export from the nucleus. May participate in a terminal step of mRNA export through the removal of proteins that accompany mRNA through the nucleopore complex. May also be involved in early transcription. The polypeptide is ATP-dependent RNA helicase dbp5 (dbp5) (Aspergillus niger (strain ATCC MYA-4892 / CBS 513.88 / FGSC A1513)).